The sequence spans 187 residues: MMKMKTLLALAISGICAAGVANAHDHMAKPAGPSIEVKVQQLDPANGNKDVGTVTITESNYGLVFTPNLQGLAEGLHGFHIHENPSCDPKEKDGKLTSGLAAGGHWDPKGAKQHGYPWQDDAHLGDLPALTVLHDGTATNPVLAPRLKKLDEVRGHSIMIHAGGDNHSDHPAPLGGGGPRMACGVIK.

The first 23 residues, 1–23, serve as a signal peptide directing secretion; sequence MMKMKTLLALAISGICAAGVANA. Cu cation is bound by residues H80, H82, and H105. Residues C87 and C183 are joined by a disulfide bond. H105, H114, H123, and D126 together coordinate Zn(2+). H161 lines the Cu cation pocket.

This sequence belongs to the Cu-Zn superoxide dismutase family. In terms of assembly, homodimer. It depends on Cu cation as a cofactor. The cofactor is Zn(2+).

The protein resides in the periplasm. It carries out the reaction 2 superoxide + 2 H(+) = H2O2 + O2. Its function is as follows. Destroys radicals which are normally produced within the cells and which are toxic to biological systems. Functionally, may confer survival advantage by accelerating dismutation of superoxide of environmental origin to hydrogen peroxide, disruptive to the normal mucociliary clearance process in the host. The chain is Superoxide dismutase [Cu-Zn] (sodC) from Haemophilus parainfluenzae.